Here is a 324-residue protein sequence, read N- to C-terminus: GDP-mannose transporter (324 aa).

Topologically, residues 1–13 are cytoplasmic; sequence MSELKSRIGNSGS. A helical membrane pass occupies residues 14-34; the sequence is IANSGPVSILCYCASSILMTV. Over 35-44 the chain is Lumenal; that stretch reads TNKFVVNTDG. The helical transmembrane segment at 45–65 threads the bilayer; the sequence is FNMFFVMLFAQSLVCTMCLMV. Residues 66–76 are Cytoplasmic-facing; that stretch reads LKMFGYAKYRP. The helical transmembrane segment at 77-97 threads the bilayer; it reads LNLIDVKNWLPISFLLVFMIF. The Lumenal segment spans residues 98–116; sequence TSAKALKYMPVPIYTIFKN. Asparagine 116 is a glycosylation site (N-linked (GlcNAc...) asparagine). The helical transmembrane segment at 117–137 threads the bilayer; sequence LTIILIAYGEVLFFGGSVTPM. Position 138 (glutamate 138) is a topological domain, cytoplasmic. A helical membrane pass occupies residues 139-159; the sequence is LSSFILMVLSSVVASLGDQQA. Topologically, residues 160–170 are lumenal; it reads AKIAQPLANNS. N-linked (GlcNAc...) asparagine glycosylation occurs at asparagine 168. The chain crosses the membrane as a helical span at residues 171–191; that stretch reads ILSPEYYWMFLNCICSASFVL. Residues 192–204 are Cytoplasmic-facing; sequence IMRKRIKLTNFKD. A helical transmembrane segment spans residues 205-225; sequence YDTMFYNNALALPILLGFSFL. At 226 to 243 the chain is on the lumenal side; it reads SEDWSSENLAQNFSGESL. Asparagine 237 carries N-linked (GlcNAc...) asparagine glycosylation. A helical membrane pass occupies residues 244–264; it reads SAMIISGMTSVGISYCSGWCV. The Cytoplasmic segment spans residues 265–270; it reads RATSST. Residues 271 to 291 traverse the membrane as a helical segment; that stretch reads TYSMVGALNKLPIALAGLIFF. The Lumenal segment spans residues 292–295; sequence DAPR. A helical membrane pass occupies residues 296-316; sequence NFLSIMSIFIGFASGLSYAVA. Residues 317–324 are Cytoplasmic-facing; the sequence is KQKKVQKN.

Belongs to the TPT transporter family. SLC35D subfamily. In terms of assembly, homooligomer.

It is found in the golgi apparatus membrane. The protein localises to the cytoplasmic vesicle membrane. It localises to the endoplasmic reticulum membrane. In terms of biological role, involved in the import of GDP-mannose from the cytoplasm into the Golgi lumen. The protein is GDP-mannose transporter (VRG4) of Candida glabrata (strain ATCC 2001 / BCRC 20586 / JCM 3761 / NBRC 0622 / NRRL Y-65 / CBS 138) (Yeast).